The sequence spans 242 residues: uncharacterized protein (242 aa).

The next 2 helical transmembrane spans lie at 4–24 (NYQV…YYVV) and 34–54 (LLFG…WLFG). Asparagine 73 carries N-linked (GlcNAc...) asparagine; by host glycosylation. Helical transmembrane passes span 74–94 (YTIV…VIGY), 106–126 (VLTV…YGGF), and 162–182 (LDVF…FVMY). Asparagine 185 carries N-linked (GlcNAc...) asparagine; by host glycosylation. The next 2 membrane-spanning stretches (helical) occupy residues 189–209 (VIGL…APTL) and 217–237 (CLLS…STGI).

The protein resides in the membrane. This is an uncharacterized protein from Acanthamoeba polyphaga mimivirus (APMV).